A 235-amino-acid chain; its full sequence is Nuclear egress protein 2 (235 aa).

Topologically, residues Met-1–Asn-214 are perinuclear space. Residues Ile-215–Trp-232 form a helical membrane-spanning segment. Over Arg-233–Leu-235 the chain is Nuclear.

This sequence belongs to the herpesviridae NEC2 protein family. As to quaternary structure, forms a heterohexameric complex with NEC1. In terms of processing, phosphorylated.

The protein resides in the host nucleus inner membrane. Functionally, plays an essential role in virion nuclear egress, the first step of virion release from infected cell. Within the host nucleus, NEC1 interacts with the newly formed capsid through the vertexes and directs it to the inner nuclear membrane by associating with NEC2. Induces the budding of the capsid at the inner nuclear membrane as well as its envelopment into the perinuclear space. There, the NEC1/NEC2 complex promotes the fusion of the enveloped capsid with the outer nuclear membrane and the subsequent release of the viral capsid into the cytoplasm where it will reach the secondary budding sites in the host Golgi or trans-Golgi network. The protein is Nuclear egress protein 2 of Saimiri sciureus (Common squirrel monkey).